The chain runs to 598 residues: Elongation factor 4 (598 aa).

The tr-type G domain occupies 2-184 (KNIRNFSIIA…EIVRKIPAPE (183 aa)). Residues 14–19 (DHGKST) and 131–134 (NKID) contribute to the GTP site.

Belongs to the TRAFAC class translation factor GTPase superfamily. Classic translation factor GTPase family. LepA subfamily.

It is found in the cell inner membrane. The catalysed reaction is GTP + H2O = GDP + phosphate + H(+). In terms of biological role, required for accurate and efficient protein synthesis under certain stress conditions. May act as a fidelity factor of the translation reaction, by catalyzing a one-codon backward translocation of tRNAs on improperly translocated ribosomes. Back-translocation proceeds from a post-translocation (POST) complex to a pre-translocation (PRE) complex, thus giving elongation factor G a second chance to translocate the tRNAs correctly. Binds to ribosomes in a GTP-dependent manner. This chain is Elongation factor 4, found in Histophilus somni (strain 2336) (Haemophilus somnus).